The primary structure comprises 505 residues: DEAD-box ATP-dependent RNA helicase 8 (505 aa).

Positions 1–85 (MNNRGRYPPG…GQIPGGNSNG (85 aa)) are disordered. Over residues 20-31 (PNPNYQSRSGYQ) the composition is skewed to polar residues. A compositionally biased stretch (low complexity) spans 43-71 (NYAQNHQQQFQQAPSQPHQYQQQQQQQQQ). Residues 131–159 (NEFEDYFLKRELLMGIYEKGFERPSPIQE) carry the Q motif motif. The 171-residue stretch at 162–332 (IPIALTGRDI…DRFLTNPYVI (171 aa)) folds into the Helicase ATP-binding domain. ATP is bound at residue 175–182 (AKNGTGKT). Threonine 237 is modified (phosphothreonine). The DEAD box motif lies at 280 to 283 (DEAD). One can recognise a Helicase C-terminal domain in the interval 342–502 (GITQFYAFVE…QIPPHIDQAI (161 aa)).

It belongs to the DEAD box helicase family. DDX6/DHH1 subfamily.

Its subcellular location is the cytoplasm. It is found in the P-body. The enzyme catalyses ATP + H2O = ADP + phosphate + H(+). In terms of biological role, ATP-dependent RNA helicase involved in mRNA turnover, and more specifically in mRNA decapping. This Arabidopsis thaliana (Mouse-ear cress) protein is DEAD-box ATP-dependent RNA helicase 8 (RH8).